The chain runs to 72 residues: uncharacterized protein (72 aa).

The protein belongs to the phage portal family. HK97 subfamily.

This is an uncharacterized protein from Rickettsia conorii (strain ATCC VR-613 / Malish 7).